A 282-amino-acid polypeptide reads, in one-letter code: Probable endonuclease 4 (282 aa).

Zn(2+) is bound by residues His-69, His-109, Glu-145, Asp-179, His-182, His-216, Asp-229, His-231, and Glu-261.

The protein belongs to the AP endonuclease 2 family. It depends on Zn(2+) as a cofactor.

It catalyses the reaction Endonucleolytic cleavage to 5'-phosphooligonucleotide end-products.. Its function is as follows. Endonuclease IV plays a role in DNA repair. It cleaves phosphodiester bonds at apurinic or apyrimidinic (AP) sites, generating a 3'-hydroxyl group and a 5'-terminal sugar phosphate. This chain is Probable endonuclease 4, found in Magnetococcus marinus (strain ATCC BAA-1437 / JCM 17883 / MC-1).